Reading from the N-terminus, the 277-residue chain is 3-methyl-2-oxobutanoate hydroxymethyltransferase (277 aa).

Residues D43 and D82 each contribute to the Mg(2+) site. 3-methyl-2-oxobutanoate is bound by residues 43–44, D82, and K112; that span reads DS. E114 contributes to the Mg(2+) binding site. The active-site Proton acceptor is the E181.

This sequence belongs to the PanB family. Homodecamer; pentamer of dimers. Mg(2+) is required as a cofactor.

The protein resides in the cytoplasm. The enzyme catalyses 3-methyl-2-oxobutanoate + (6R)-5,10-methylene-5,6,7,8-tetrahydrofolate + H2O = 2-dehydropantoate + (6S)-5,6,7,8-tetrahydrofolate. The protein operates within cofactor biosynthesis; (R)-pantothenate biosynthesis; (R)-pantoate from 3-methyl-2-oxobutanoate: step 1/2. Functionally, catalyzes the reversible reaction in which hydroxymethyl group from 5,10-methylenetetrahydrofolate is transferred onto alpha-ketoisovalerate to form ketopantoate. The chain is 3-methyl-2-oxobutanoate hydroxymethyltransferase from Bacillus licheniformis (strain ATCC 14580 / DSM 13 / JCM 2505 / CCUG 7422 / NBRC 12200 / NCIMB 9375 / NCTC 10341 / NRRL NRS-1264 / Gibson 46).